We begin with the raw amino-acid sequence, 191 residues long: Large ribosomal subunit protein uL6A (191 aa).

The protein belongs to the universal ribosomal protein uL6 family. As to quaternary structure, component of the large ribosomal subunit (LSU). Mature yeast ribosomes consist of a small (40S) and a large (60S) subunit. The 40S small subunit contains 1 molecule of ribosomal RNA (18S rRNA) and 33 different proteins (encoded by 57 genes). The large 60S subunit contains 3 rRNA molecules (25S, 5.8S and 5S rRNA) and 46 different proteins (encoded by 81 genes). uL6 lines the binding pocket for eukaryotic elongation factor 2 (eEF2).

Its subcellular location is the cytoplasm. Its function is as follows. Component of the ribosome, a large ribonucleoprotein complex responsible for the synthesis of proteins in the cell. The small ribosomal subunit (SSU) binds messenger RNAs (mRNAs) and translates the encoded message by selecting cognate aminoacyl-transfer RNA (tRNA) molecules. The large subunit (LSU) contains the ribosomal catalytic site termed the peptidyl transferase center (PTC), which catalyzes the formation of peptide bonds, thereby polymerizing the amino acids delivered by tRNAs into a polypeptide chain. The nascent polypeptides leave the ribosome through a tunnel in the LSU and interact with protein factors that function in enzymatic processing, targeting, and the membrane insertion of nascent chains at the exit of the ribosomal tunnel. This chain is Large ribosomal subunit protein uL6A, found in Saccharomyces cerevisiae (strain ATCC 204508 / S288c) (Baker's yeast).